The following is a 529-amino-acid chain: Peptide chain release factor 3 (529 aa).

A tr-type G domain is found at 11-280 (AKRRTFAIIS…GLVEWAPAPM (270 aa)). GTP-binding positions include 20-27 (SHPDAGKT), 88-92 (DTPGH), and 142-145 (NKLD).

Belongs to the TRAFAC class translation factor GTPase superfamily. Classic translation factor GTPase family. PrfC subfamily.

Its subcellular location is the cytoplasm. In terms of biological role, increases the formation of ribosomal termination complexes and stimulates activities of RF-1 and RF-2. It binds guanine nucleotides and has strong preference for UGA stop codons. It may interact directly with the ribosome. The stimulation of RF-1 and RF-2 is significantly reduced by GTP and GDP, but not by GMP. The protein is Peptide chain release factor 3 of Shigella flexneri serotype 5b (strain 8401).